The sequence spans 385 residues: 1-deoxy-D-xylulose 5-phosphate reductoisomerase (385 aa).

Positions 10, 11, 13, 36, and 38 each coordinate NADPH. Residue Lys123 coordinates 1-deoxy-D-xylulose 5-phosphate. Residue Glu124 participates in NADPH binding. A Mn(2+)-binding site is contributed by Asp148. 1-deoxy-D-xylulose 5-phosphate-binding residues include Ser149, Glu150, Ser172, and His195. Glu150 contacts Mn(2+). Gly201 is an NADPH binding site. Residues Ser208, Asn213, Lys214, and Glu217 each contribute to the 1-deoxy-D-xylulose 5-phosphate site. Residue Glu217 coordinates Mn(2+).

It belongs to the DXR family. Requires Mg(2+) as cofactor. Mn(2+) serves as cofactor.

The enzyme catalyses 2-C-methyl-D-erythritol 4-phosphate + NADP(+) = 1-deoxy-D-xylulose 5-phosphate + NADPH + H(+). It participates in isoprenoid biosynthesis; isopentenyl diphosphate biosynthesis via DXP pathway; isopentenyl diphosphate from 1-deoxy-D-xylulose 5-phosphate: step 1/6. In terms of biological role, catalyzes the NADPH-dependent rearrangement and reduction of 1-deoxy-D-xylulose-5-phosphate (DXP) to 2-C-methyl-D-erythritol 4-phosphate (MEP). This Anaplasma phagocytophilum (strain HZ) protein is 1-deoxy-D-xylulose 5-phosphate reductoisomerase.